The sequence spans 129 residues: Small ribosomal subunit protein uS11 (129 aa).

This sequence belongs to the universal ribosomal protein uS11 family. Part of the 30S ribosomal subunit. Interacts with proteins S7 and S18. Binds to IF-3.

Located on the platform of the 30S subunit, it bridges several disparate RNA helices of the 16S rRNA. Forms part of the Shine-Dalgarno cleft in the 70S ribosome. In Parabacteroides distasonis (strain ATCC 8503 / DSM 20701 / CIP 104284 / JCM 5825 / NCTC 11152), this protein is Small ribosomal subunit protein uS11.